A 489-amino-acid polypeptide reads, in one-letter code: Acetyl-coenzyme A carboxylase carboxyl transferase subunit beta, chloroplastic (489 aa).

One can recognise a CoA carboxyltransferase N-terminal domain in the interval 225–489 (LWIQCDNCYG…FFPLNKTEIK (265 aa)). Zn(2+)-binding residues include Cys229, Cys232, Cys245, and Cys248. The C4-type zinc-finger motif lies at 229–248 (CDNCYGLMYKKVEMNVCEEC).

It belongs to the AccD/PCCB family. As to quaternary structure, acetyl-CoA carboxylase is a heterohexamer composed of biotin carboxyl carrier protein, biotin carboxylase and 2 subunits each of ACCase subunit alpha and ACCase plastid-coded subunit beta (accD). It depends on Zn(2+) as a cofactor.

Its subcellular location is the plastid. The protein resides in the chloroplast stroma. It carries out the reaction N(6)-carboxybiotinyl-L-lysyl-[protein] + acetyl-CoA = N(6)-biotinyl-L-lysyl-[protein] + malonyl-CoA. The protein operates within lipid metabolism; malonyl-CoA biosynthesis; malonyl-CoA from acetyl-CoA: step 1/1. In terms of biological role, component of the acetyl coenzyme A carboxylase (ACC) complex. Biotin carboxylase (BC) catalyzes the carboxylation of biotin on its carrier protein (BCCP) and then the CO(2) group is transferred by the transcarboxylase to acetyl-CoA to form malonyl-CoA. The sequence is that of Acetyl-coenzyme A carboxylase carboxyl transferase subunit beta, chloroplastic from Draba nemorosa (Woodland whitlowgrass).